The primary structure comprises 138 residues: Proofreading thioesterase EntH (138 aa).

The active-site Nucleophile or proton acceptor is Glu64.

Belongs to the thioesterase PaaI family. In terms of assembly, homotetramer. Dimer of dimers. Interacts specifically with the aryl carrier protein (ArCP) domain of EntB.

The protein localises to the cytoplasm. The protein operates within siderophore biosynthesis; enterobactin biosynthesis. Required for optimal enterobactin synthesis. Acts as a proofreading enzyme that prevents EntB misacylation by hydrolyzing the thioester bound existing between EntB and wrongly charged molecules. This chain is Proofreading thioesterase EntH, found in Citrobacter rodentium (strain ICC168) (Citrobacter freundii biotype 4280).